The sequence spans 934 residues: 2-oxoglutarate dehydrogenase E1 component (934 aa).

The protein belongs to the alpha-ketoglutarate dehydrogenase family. As to quaternary structure, homodimer. Part of the 2-oxoglutarate dehydrogenase (OGDH) complex composed of E1 (2-oxoglutarate dehydrogenase), E2 (dihydrolipoamide succinyltransferase) and E3 (dihydrolipoamide dehydrogenase); the complex contains multiple copies of the three enzymatic components (E1, E2 and E3). Thiamine diphosphate serves as cofactor.

It carries out the reaction N(6)-[(R)-lipoyl]-L-lysyl-[protein] + 2-oxoglutarate + H(+) = N(6)-[(R)-S(8)-succinyldihydrolipoyl]-L-lysyl-[protein] + CO2. E1 component of the 2-oxoglutarate dehydrogenase (OGDH) complex which catalyzes the decarboxylation of 2-oxoglutarate, the first step in the conversion of 2-oxoglutarate to succinyl-CoA and CO(2). This is 2-oxoglutarate dehydrogenase E1 component from Staphylococcus epidermidis (strain ATCC 35984 / DSM 28319 / BCRC 17069 / CCUG 31568 / BM 3577 / RP62A).